The sequence spans 280 residues: 2-dehydro-3-deoxyphosphooctonate aldolase (280 aa).

This sequence belongs to the KdsA family.

It localises to the cytoplasm. It carries out the reaction D-arabinose 5-phosphate + phosphoenolpyruvate + H2O = 3-deoxy-alpha-D-manno-2-octulosonate-8-phosphate + phosphate. It participates in carbohydrate biosynthesis; 3-deoxy-D-manno-octulosonate biosynthesis; 3-deoxy-D-manno-octulosonate from D-ribulose 5-phosphate: step 2/3. The protein operates within bacterial outer membrane biogenesis; lipopolysaccharide biosynthesis. The protein is 2-dehydro-3-deoxyphosphooctonate aldolase of Thiobacillus denitrificans (strain ATCC 25259 / T1).